The primary structure comprises 90 residues: Defensin-like protein 193 (90 aa).

Residues 1–27 (MAMKSVSTLAVFAILFLVIVEMPEIKA) form the signal peptide. 4 cysteine pairs are disulfide-bonded: cysteine 32/cysteine 86, cysteine 45/cysteine 69, cysteine 54/cysteine 81, and cysteine 58/cysteine 83.

Belongs to the DEFL family. Protease inhibitor I18 (RTI/MTI-2) subfamily.

The protein resides in the secreted. The polypeptide is Defensin-like protein 193 (ATTI2) (Arabidopsis thaliana (Mouse-ear cress)).